The following is a 500-amino-acid chain: uncharacterized protein (500 aa).

The N-terminal stretch at 1–20 (MHSIIFKAAVALLGVSTAAG) is a signal peptide. N-linked (GlcNAc...) asparagine glycosylation occurs at Asn43. The 173-residue stretch at 60 to 232 (TALRPDCIIA…TAFTVKTHTQ (173 aa)) folds into the FAD-binding PCMH-type domain. The residue at position 98 (His98) is a Pros-8alpha-FAD histidine. N-linked (GlcNAc...) asparagine glycosylation is found at Asn194, Asn201, Asn246, Asn299, and Asn414.

The protein belongs to the oxygen-dependent FAD-linked oxidoreductase family. FAD serves as cofactor.

It localises to the secreted. This is an uncharacterized protein from Arthroderma benhamiae (strain ATCC MYA-4681 / CBS 112371) (Trichophyton mentagrophytes).